The following is a 66-amino-acid chain: Cell division protein ZapB (66 aa).

Residues 3 to 59 adopt a coiled-coil conformation; the sequence is LELLSQLETKIQATLENIELLKMELEEEKQKSTQLAEKNQKLQQDLNSWSDKVNGLV.

The protein belongs to the ZapB family. In terms of assembly, homodimer. The ends of the coiled-coil dimer bind to each other, forming polymers. Interacts with FtsZ.

The protein resides in the cytoplasm. Non-essential, abundant cell division factor that is required for proper Z-ring formation. It is recruited early to the divisome by direct interaction with FtsZ, stimulating Z-ring assembly and thereby promoting cell division earlier in the cell cycle. Its recruitment to the Z-ring requires functional FtsA or ZipA. This is Cell division protein ZapB from Shewanella denitrificans (strain OS217 / ATCC BAA-1090 / DSM 15013).